The following is a 23-amino-acid chain: Potassium channel toxin alpha-KTx 13.1 (23 aa).

Intrachain disulfides connect C2–C15, C5–C20, and C9–C22. The tract at residues 13–20 (GKCINGRC) is interaction with Ca(2+)-activated K(+) channels.

In terms of tissue distribution, expressed by the venom gland.

It is found in the secreted. Functionally, blocks reversibly Shaker B potassium channels. Also displaces binding of noxiustoxin to mouse brain synaptosome membranes. The chain is Potassium channel toxin alpha-KTx 13.1 from Tityus obscurus (Amazonian scorpion).